Reading from the N-terminus, the 318-residue chain is Putative HTH-type transcriptional regulatory protein TK0539 (318 aa).

Residues 131-189 enclose the HTH cro/C1-type domain; sequence LRELREKHGYSVNELAQLLGVSRKSLLNYERGEQAVSLDVAIQLEEIFDEALAEPIDIL. A DNA-binding region (H-T-H motif) is located at residues 142-161; sequence VNELAQLLGVSRKSLLNYER.

In Thermococcus kodakarensis (strain ATCC BAA-918 / JCM 12380 / KOD1) (Pyrococcus kodakaraensis (strain KOD1)), this protein is Putative HTH-type transcriptional regulatory protein TK0539.